The following is a 104-amino-acid chain: Small ribosomal subunit protein uS10 (104 aa).

This sequence belongs to the universal ribosomal protein uS10 family. Part of the 30S ribosomal subunit.

In terms of biological role, involved in the binding of tRNA to the ribosomes. The polypeptide is Small ribosomal subunit protein uS10 (Gloeobacter violaceus (strain ATCC 29082 / PCC 7421)).